Consider the following 160-residue polypeptide: MASLTHLDATGAANMVDVSDKAATARTARAEGAIVMRPETLRLIREGDAKKGDVLGTARLAGIMAAKRTHDLIPLCHPLLLSKVRVECEPDAALPGIRITAEVRVQGPTGVEMEALTAVSVACLTVYDMVKAADRGMRIEGIRLLEKSGGRSGSYAADPA.

Substrate-binding positions include 75-77 and 113-114; these read LCH and ME. The active site involves aspartate 128.

This sequence belongs to the MoaC family. In terms of assembly, homohexamer; trimer of dimers.

It carries out the reaction (8S)-3',8-cyclo-7,8-dihydroguanosine 5'-triphosphate = cyclic pyranopterin phosphate + diphosphate. Its pathway is cofactor biosynthesis; molybdopterin biosynthesis. Functionally, catalyzes the conversion of (8S)-3',8-cyclo-7,8-dihydroguanosine 5'-triphosphate to cyclic pyranopterin monophosphate (cPMP). The polypeptide is Cyclic pyranopterin monophosphate synthase (Methylobacterium sp. (strain 4-46)).